The following is a 279-amino-acid chain: Phage-like element PBSX protein XepA (279 aa).

To B.subtilis YqxG/YqdC.

Its function is as follows. Not known; does not seem to be involved in host cell lysis. The chain is Phage-like element PBSX protein XepA (xepA) from Bacillus subtilis (strain 168).